We begin with the raw amino-acid sequence, 217 residues long: NADPH-dependent 3-demethoxyubiquinone 3-hydroxylase, mitochondrial (217 aa).

The N-terminal 35 residues, 1–35 (MSCAGAAAAPRLWRLRPGARRSLSAYGRRTSVRFR), are a transit peptide targeting the mitochondrion. The required for nuclear localization stretch occupies residues 11 to 29 (RLWRLRPGARRSLSAYGRR). 2 consecutive repeat copies span residues 48-129 (AVDR…TALL) and 130-217 (GKEG…SERL). A 2 X approximate tandem repeats region spans residues 48-217 (AVDRIIRVDH…RVAIYLSERL (170 aa)). Residue arginine 51 participates in NADH binding. Positions 60, 90, 93, 142, 178, and 181 each coordinate Fe cation. 2 residues coordinate NADH: tyrosine 212 and arginine 216.

The protein belongs to the COQ7 family. In terms of assembly, component of a multi-subunit COQ enzyme complex. Interacts with COQ8B and COQ6. Interacts with COQ9. Fe cation is required as a cofactor. In terms of tissue distribution, expressed dominantly in heart and skeletal muscle.

The protein resides in the mitochondrion inner membrane. Its subcellular location is the mitochondrion. It is found in the nucleus. It localises to the chromosome. It catalyses the reaction a 5-methoxy-2-methyl-3-(all-trans-polyprenyl)benzoquinone + NADH + O2 = a 3-demethylubiquinone + NAD(+) + H2O. Its pathway is cofactor biosynthesis; ubiquinone biosynthesis. Functionally, catalyzes the hydroxylation of the 5-methoxy-2-methyl-3-(all-trans-polyprenyl)benzoquinone at the C6 position and participates in the biosynthesis of ubiquinone. Catalyzes the reaction through a substrate-mediated reduction pathway, whereby NADH shuttles electrons to 5-methoxy-2-methyl-3-(all-trans-decaprenyl)benzoquinone, which then transfers the electrons to the two Fe(3+) centers. The binding of 5-methoxy-2-methyl-3-(all-trans-polyprenyl)benzoquinone (DMQn) mediates reduction of the diiron center by nicotinamide adenine dinucleotide (NADH) and initiates oxygen activation for subsequent DMQ hydroxylation. The physiological substrates are 5-methoxy-2-methyl-3-(all-trans-nonaprenyl)benzoquinone (DMQ(9)) and 5-methoxy-2-methyl-3-(all-trans-decaprenyl)benzoquinone (DMQ(10)), however in vitro the enzyme does not have any specificity concerning the length of the polyprenyl tail, and accepts tails of various lengths with similar efficiency. Also has a structural role in the COQ enzyme complex, stabilizing other COQ polypeptides. Involved in lifespan determination in a ubiquinone-independent manner. Plays a role in modulating mitochondrial stress responses, acting in the nucleus, perhaps via regulating gene expression, independent of its characterized mitochondrial function in ubiquinone biosynthesis. This chain is NADPH-dependent 3-demethoxyubiquinone 3-hydroxylase, mitochondrial, found in Homo sapiens (Human).